The following is a 255-amino-acid chain: H-2 class II histocompatibility antigen, E-D alpha chain (255 aa).

Positions 1 to 25 (MATIGALVLRFFFIAVLMSSQKSWA) are cleaved as a signal peptide. An alpha-1 region spans residues 26-109 (IKEEHTIIQA…ERSNNTPDAN (84 aa)). Over 26-216 (IKEEHTIIQA…EKTLLPETKE (191 aa)) the chain is Extracellular. Positions 110–203 (VAPEVTVLSR…GLEEPLRKTW (94 aa)) are alpha-2. An Ig-like C1-type domain is found at 112 to 204 (PEVTVLSRSP…LEEPLRKTWE (93 aa)). Residues Cys132 and Cys188 are joined by a disulfide bond. An N-linked (GlcNAc...) asparagine glycan is attached at Asn143. The connecting peptide stretch occupies residues 204-216 (EFEEKTLLPETKE). Residues 217–242 (NVMCALGLFVGLVGIVVGIILIMKGI) form a helical membrane-spanning segment. Residues 243–255 (KKRNVVERRQGAL) are Cytoplasmic-facing.

It belongs to the MHC class II family.

It localises to the membrane. In Mus musculus (Mouse), this protein is H-2 class II histocompatibility antigen, E-D alpha chain (H2-Ea).